The following is a 170-amino-acid chain: Zinc finger matrin-type protein 5 (170 aa).

A C3H1-type zinc finger spans residues 51-79 (EQNKRPCRKFLLTGQCDFGSNCRFSHMSE). Residues 150–170 (PPSLRAPPPGGWPLQPSVQWG) form a disordered region.

In terms of assembly, component of the U11/U12 snRNPs that are part of the U12-type spliceosome.

The protein resides in the nucleus. In Bos taurus (Bovine), this protein is Zinc finger matrin-type protein 5 (ZMAT5).